The sequence spans 1039 residues: Translation initiation factor IF-2 (1039 aa).

Disordered regions lie at residues 39–347 (TISE…KWQE) and 400–452 (ARPP…PEKV). Positions 103–125 (RNTTSNAPEASVANNQIASSEAN) are enriched in polar residues. Residues 157-176 (PQKPAAPEAEPEAQSQAPAK) are compositionally biased toward low complexity. Basic and acidic residues-rich tracts occupy residues 178–197 (AVEK…ERQP) and 226–243 (PILK…DQAK). A compositionally biased stretch (low complexity) spans 408–423 (ARSASAATAAPISSPT). Over residues 432–451 (NNRDQNRRQETEVKRERPEK) the composition is skewed to basic and acidic residues. The tr-type G domain occupies 533–706 (RRPPVVTIMG…LLVAEVGELS (174 aa)). Residues 542 to 549 (GHVDHGKT) form a G1 region. 542–549 (GHVDHGKT) serves as a coordination point for GTP. A G2 region spans residues 567 to 571 (GITQH). Residues 592–595 (DTPG) form a G3 region. Residues 592-596 (DTPGH) and 646-649 (NKID) contribute to the GTP site. The segment at 646–649 (NKID) is G4. The tract at residues 682–684 (SAI) is G5.

This sequence belongs to the TRAFAC class translation factor GTPase superfamily. Classic translation factor GTPase family. IF-2 subfamily.

Its subcellular location is the cytoplasm. Its function is as follows. One of the essential components for the initiation of protein synthesis. Protects formylmethionyl-tRNA from spontaneous hydrolysis and promotes its binding to the 30S ribosomal subunits. Also involved in the hydrolysis of GTP during the formation of the 70S ribosomal complex. In Nostoc sp. (strain PCC 7120 / SAG 25.82 / UTEX 2576), this protein is Translation initiation factor IF-2.